Consider the following 211-residue polypeptide: Imidazole glycerol phosphate synthase subunit HisH (211 aa).

Positions 4 to 211 constitute a Glutamine amidotransferase type-1 domain; the sequence is TVALLDYGSG…QLLRNWINHI (208 aa). Cys-82 acts as the Nucleophile in catalysis. Catalysis depends on residues His-192 and Glu-194.

Heterodimer of HisH and HisF.

Its subcellular location is the cytoplasm. The enzyme catalyses 5-[(5-phospho-1-deoxy-D-ribulos-1-ylimino)methylamino]-1-(5-phospho-beta-D-ribosyl)imidazole-4-carboxamide + L-glutamine = D-erythro-1-(imidazol-4-yl)glycerol 3-phosphate + 5-amino-1-(5-phospho-beta-D-ribosyl)imidazole-4-carboxamide + L-glutamate + H(+). It carries out the reaction L-glutamine + H2O = L-glutamate + NH4(+). It participates in amino-acid biosynthesis; L-histidine biosynthesis; L-histidine from 5-phospho-alpha-D-ribose 1-diphosphate: step 5/9. IGPS catalyzes the conversion of PRFAR and glutamine to IGP, AICAR and glutamate. The HisH subunit catalyzes the hydrolysis of glutamine to glutamate and ammonia as part of the synthesis of IGP and AICAR. The resulting ammonia molecule is channeled to the active site of HisF. The protein is Imidazole glycerol phosphate synthase subunit HisH of Corynebacterium efficiens (strain DSM 44549 / YS-314 / AJ 12310 / JCM 11189 / NBRC 100395).